The chain runs to 936 residues: 2-oxoglutarate dehydrogenase E1 component (936 aa).

This sequence belongs to the alpha-ketoglutarate dehydrogenase family. Homodimer. Part of the 2-oxoglutarate dehydrogenase (OGDH) complex composed of E1 (2-oxoglutarate dehydrogenase), E2 (dihydrolipoamide succinyltransferase) and E3 (dihydrolipoamide dehydrogenase); the complex contains multiple copies of the three enzymatic components (E1, E2 and E3). Thiamine diphosphate serves as cofactor.

The catalysed reaction is N(6)-[(R)-lipoyl]-L-lysyl-[protein] + 2-oxoglutarate + H(+) = N(6)-[(R)-S(8)-succinyldihydrolipoyl]-L-lysyl-[protein] + CO2. In terms of biological role, E1 component of the 2-oxoglutarate dehydrogenase (OGDH) complex which catalyzes the decarboxylation of 2-oxoglutarate, the first step in the conversion of 2-oxoglutarate to succinyl-CoA and CO(2). In Rickettsia prowazekii (strain Madrid E), this protein is 2-oxoglutarate dehydrogenase E1 component (sucA).